Here is a 402-residue protein sequence, read N- to C-terminus: MDTKSFKRTLQQSDNYNRKGFGHKEEVMDAMTNEYQSDLIQEIRENNYRLQRGDVTIYLAQAFGFCWGVERAVAMAYETRQHFPQERIWITNEIIHNPSVNQRLRSMAVGFIPVENGQKDFTVVESGDVVILPAFGASVSEMQILNDKGCMIVDTTCPWVSKVWNSVEKHKKSDHTSIIHGKYNHEETIATSSFAGTYLIVLNLDQANYVANYILHGGDKNEFLEKFKNAHSQGFDPDRDLDYIGIANQTTMLKSETEEIGKLFEHTMLRKYGPIDFKDHFMSFNTICDATQERQDAIFELVKEPLSLMVVIGGYNSSNTTHLQEIAIERAIPSYHIDSAERILPGNRIEHKPLGDDLIITDNWLNEGKIVVGVTSGASTPDKVVEEVIEKIFAFKSSLVPG.

C66 is a binding site for [4Fe-4S] cluster. Residue H96 coordinates (2E)-4-hydroxy-3-methylbut-2-enyl diphosphate. Dimethylallyl diphosphate is bound at residue H96. An isopentenyl diphosphate-binding site is contributed by H96. Position 157 (C157) interacts with [4Fe-4S] cluster. Position 185 (H185) interacts with (2E)-4-hydroxy-3-methylbut-2-enyl diphosphate. A dimethylallyl diphosphate-binding site is contributed by H185. Residue H185 coordinates isopentenyl diphosphate. Residue E187 is the Proton donor of the active site. A (2E)-4-hydroxy-3-methylbut-2-enyl diphosphate-binding site is contributed by T250. C288 provides a ligand contact to [4Fe-4S] cluster. The (2E)-4-hydroxy-3-methylbut-2-enyl diphosphate site is built by S317, S318, N319, and S379. S317, S318, N319, and S379 together coordinate dimethylallyl diphosphate. Isopentenyl diphosphate-binding residues include S317, S318, N319, and S379.

The protein belongs to the IspH family. [4Fe-4S] cluster serves as cofactor.

It carries out the reaction isopentenyl diphosphate + 2 oxidized [2Fe-2S]-[ferredoxin] + H2O = (2E)-4-hydroxy-3-methylbut-2-enyl diphosphate + 2 reduced [2Fe-2S]-[ferredoxin] + 2 H(+). It catalyses the reaction dimethylallyl diphosphate + 2 oxidized [2Fe-2S]-[ferredoxin] + H2O = (2E)-4-hydroxy-3-methylbut-2-enyl diphosphate + 2 reduced [2Fe-2S]-[ferredoxin] + 2 H(+). Its pathway is isoprenoid biosynthesis; dimethylallyl diphosphate biosynthesis; dimethylallyl diphosphate from (2E)-4-hydroxy-3-methylbutenyl diphosphate: step 1/1. It participates in isoprenoid biosynthesis; isopentenyl diphosphate biosynthesis via DXP pathway; isopentenyl diphosphate from 1-deoxy-D-xylulose 5-phosphate: step 6/6. Its function is as follows. Catalyzes the conversion of 1-hydroxy-2-methyl-2-(E)-butenyl 4-diphosphate (HMBPP) into a mixture of isopentenyl diphosphate (IPP) and dimethylallyl diphosphate (DMAPP). Acts in the terminal step of the DOXP/MEP pathway for isoprenoid precursor biosynthesis. The sequence is that of 4-hydroxy-3-methylbut-2-enyl diphosphate reductase from Microcystis aeruginosa (strain NIES-843 / IAM M-2473).